A 301-amino-acid polypeptide reads, in one-letter code: Phosphatidylglycerol--prolipoprotein diacylglyceryl transferase (301 aa).

4 helical membrane-spanning segments follow: residues 10 to 30, 57 to 77, 92 to 112, and 119 to 139; these read IAFSLGPVKVHWYGLMYLAGF, LLFYAMMGVVLGGRVGYMLFY, VWEGGMSFHGGLIGVLLAVAW, and MHMFDVVDFCAPLVPVGLGFG. Arginine 140 provides a ligand contact to a 1,2-diacyl-sn-glycero-3-phospho-(1'-sn-glycerol). The next 3 helical transmembrane spans lie at 202-222, 230-250, and 264-284; these read PSQLYEAFLEGLVMFIVLWLF, YAVSGLFALLYGVFRFLVEFV, and LTRGQILSLPLIVIGLFLFWL.

It belongs to the Lgt family.

The protein resides in the cell inner membrane. It carries out the reaction L-cysteinyl-[prolipoprotein] + a 1,2-diacyl-sn-glycero-3-phospho-(1'-sn-glycerol) = an S-1,2-diacyl-sn-glyceryl-L-cysteinyl-[prolipoprotein] + sn-glycerol 1-phosphate + H(+). The protein operates within protein modification; lipoprotein biosynthesis (diacylglyceryl transfer). Catalyzes the transfer of the diacylglyceryl group from phosphatidylglycerol to the sulfhydryl group of the N-terminal cysteine of a prolipoprotein, the first step in the formation of mature lipoproteins. The protein is Phosphatidylglycerol--prolipoprotein diacylglyceryl transferase of Xylella fastidiosa (strain M12).